The sequence spans 152 residues: MQVPVGSRLVLALAFVLVWGSSVQGYPARRARYQWVRCKPNGFFANCIEEKGPQFDLIDESNNIGPPMNNPVLMEGPSKDFISNYDDYGSGSGSGSGSGSGSGSGSGSGFLGDMEWEYQPTDESNIVYFNYKPFDRILTEQNQDQPEDDFII.

A signal peptide spans 1-25 (MQVPVGSRLVLALAFVLVWGSSVQG). The propeptide at 26 to 74 (YPARRARYQWVRCKPNGFFANCIEEKGPQFDLIDESNNIGPPMNNPVLM) is activation peptide. Cysteines 38 and 47 form a disulfide. Residues 66–115 (PPMNNPVLMEGPSKDFISNYDDYGSGSGSGSGSGSGSGSGSGSGFLGDME) form a disordered region. 10 consecutive repeat copies span residues 89–90 (GS), 91–92 (GS), 93–94 (GS), 95–96 (GS), 97–98 (GS), 99–100 (GS), 101–102 (GS), 103–104 (GS), 105–106 (GS), and 107–108 (GS). Residues 89–108 (GSGSGSGSGSGSGSGSGSGS) are 10 X 2 AA tandem repeats of G-S. Over residues 90 to 110 (SGSGSGSGSGSGSGSGSGSGF) the composition is skewed to gly residues. O-linked (Xyl...) (glycosaminoglycan) serine glycans are attached at residues serine 92 and serine 94. Residues serine 98, serine 100, serine 102, serine 104, serine 106, and serine 108 are each glycosylated (O-linked (Xyl...) (glycosaminoglycan) serine).

Belongs to the serglycin family. Binds to activated CD44 and to GZMB. Post-translationally, O-glycosylated; contains chondroitin sulfate and heparan sulfate.

The protein localises to the cytoplasmic granule. Its subcellular location is the cytolytic granule. It localises to the secreted. It is found in the extracellular space. The protein resides in the golgi apparatus. In terms of biological role, plays a role in formation of mast cell secretory granules and mediates storage of various compounds in secretory vesicles. Required for storage of some proteases in both connective tissue and mucosal mast cells and for storage of granzyme B in T-lymphocytes. Plays a role in localizing neutrophil elastase in azurophil granules of neutrophils. Mediates processing of MMP2. Plays a role in cytotoxic cell granule-mediated apoptosis by forming a complex with granzyme B which is delivered to cells by perforin to induce apoptosis. Regulates the secretion of TNF-alpha and may also regulate protease secretion. Inhibits bone mineralization. This chain is Serglycin (Srgn), found in Mus musculus (Mouse).